The primary structure comprises 302 residues: Protein FdhE homolog (302 aa).

This sequence belongs to the FdhE family.

Its subcellular location is the cytoplasm. Its function is as follows. Necessary for formate dehydrogenase activity. This Haemophilus influenzae (strain PittEE) protein is Protein FdhE homolog.